A 476-amino-acid polypeptide reads, in one-letter code: Glucan endo-1,3-beta-glucosidase 9 (476 aa).

Residues 1 to 25 form the signal peptide; the sequence is MARRLFLLLLAVTAGLSLTGTTVRA. N-linked (GlcNAc...) asparagine glycans are attached at residues Asn-88 and Asn-101. Glu-122 functions as the Proton donor in the catalytic mechanism. N-linked (GlcNAc...) asparagine glycans are attached at residues Asn-184, Asn-216, Asn-277, Asn-320, Asn-342, Asn-374, and Asn-405. Cysteines 364 and 424 form a disulfide. Ser-453 carries GPI-anchor amidated serine lipidation. Positions 454 to 476 are cleaved as a propeptide — removed in mature form; the sequence is SSQTPNFFQSWPLLLLFLLSGLF.

It belongs to the glycosyl hydrolase 17 family. In terms of processing, contains two additional disulfide bonds.

It localises to the secreted. The protein localises to the cell wall. It is found in the cell membrane. It catalyses the reaction Hydrolysis of (1-&gt;3)-beta-D-glucosidic linkages in (1-&gt;3)-beta-D-glucans.. The sequence is that of Glucan endo-1,3-beta-glucosidase 9 from Arabidopsis thaliana (Mouse-ear cress).